A 91-amino-acid polypeptide reads, in one-letter code: Small ribosomal subunit protein bS18 (91 aa).

It belongs to the bacterial ribosomal protein bS18 family. As to quaternary structure, part of the 30S ribosomal subunit. Forms a tight heterodimer with protein bS6.

Binds as a heterodimer with protein bS6 to the central domain of the 16S rRNA, where it helps stabilize the platform of the 30S subunit. This Thiobacillus denitrificans (strain ATCC 25259 / T1) protein is Small ribosomal subunit protein bS18.